Here is a 177-residue protein sequence, read N- to C-terminus: Macro domain-containing protein in non 5'region (177 aa).

The region spanning 1–177 (MSTSVSPVVR…VEFEEVLAMR (177 aa)) is the Macro domain.

The protein belongs to the MacroD-type family.

This is Macro domain-containing protein in non 5'region from Streptomyces griseus.